A 37-amino-acid chain; its full sequence is Cytochrome b6-f complex subunit 5 (37 aa).

Residues 5-25 (LLSGIVLGLITVSALGLFVAA) form a helical membrane-spanning segment.

It belongs to the PetG family. As to quaternary structure, the 4 large subunits of the cytochrome b6-f complex are cytochrome b6, subunit IV (17 kDa polypeptide, PetD), cytochrome f and the Rieske protein, while the 4 small subunits are PetG, PetL, PetM and PetN. The complex functions as a dimer.

The protein localises to the plastid. Its subcellular location is the chloroplast thylakoid membrane. Its function is as follows. Component of the cytochrome b6-f complex, which mediates electron transfer between photosystem II (PSII) and photosystem I (PSI), cyclic electron flow around PSI, and state transitions. PetG is required for either the stability or assembly of the cytochrome b6-f complex. The polypeptide is Cytochrome b6-f complex subunit 5 (Phaeodactylum tricornutum (strain CCAP 1055/1)).